Here is a 369-residue protein sequence, read N- to C-terminus: Glycine oxidase (369 aa).

FAD is bound by residues 14 to 15 (II), 34 to 35 (ES), 42 to 43 (TT), 47 to 49 (AGM), and valine 174. The substrate site is built by arginine 302 and arginine 329. Position 327 to 333 (327 to 333 (HFRNGIL)) interacts with FAD.

It belongs to the DAO family. ThiO subfamily. As to quaternary structure, homotetramer. FAD is required as a cofactor.

The protein localises to the cytoplasm. It catalyses the reaction glycine + O2 + H2O = glyoxylate + H2O2 + NH4(+). It carries out the reaction N-ethylglycine + O2 + H2O = ethylamine + glyoxylate + H2O2. The enzyme catalyses sarcosine + O2 + H2O = methylamine + glyoxylate + H2O2. The catalysed reaction is D-alanine + O2 + H2O = pyruvate + H2O2 + NH4(+). It catalyses the reaction glyphosate + O2 + H2O = aminomethylphosphonate + glyoxylate + H2O2 + H(+). It functions in the pathway cofactor biosynthesis; thiamine diphosphate biosynthesis. Is competitively inhibited by glycolate. Catalyzes the FAD-dependent oxidative deamination of various amines and D-amino acids to yield the corresponding alpha-keto acids, ammonia/amine, and hydrogen peroxide. Oxidizes sarcosine (N-methylglycine), N-ethylglycine and glycine. Can also oxidize the herbicide glyphosate (N-phosphonomethylglycine). Displays lower activities on D-alanine, D-valine, D-proline and D-methionine. Does not act on L-amino acids and other D-amino acids. Is essential for thiamine biosynthesis since the oxidation of glycine catalyzed by ThiO generates the glycine imine intermediate (dehydroglycine) required for the biosynthesis of the thiazole ring of thiamine pyrophosphate. The chain is Glycine oxidase from Bacillus subtilis (strain 168).